Consider the following 224-residue polypeptide: MGPLIAPSILAADFARLTDEAAVVASADWLHVDVMDGHFVPNLTIGLPVVQSLLAASDIPMDCHLMIDNPDRWAPPYAEAGAYNVTFHAEATDNPVGVAHDIRTAGAKAGIGVKPGTPLNPYLDILPHFDTLLIMSVEPGFGGQAFIPEVLSKVRTVRKMVDAGELTILVEIDGGINADTIEQAAEAGVDCFVAGSAVYGAADPSAAVAALRRRAGAVSPHLRR.

Ser-8 provides a ligand contact to substrate. A divalent metal cation-binding residues include His-31, Asp-33, and His-64. Asp-33 serves as the catalytic Proton acceptor. Substrate is bound by residues His-64, 140-143, 173-175, and 195-196; these read GFGG, DGG, and GS. Residue Asp-173 participates in a divalent metal cation binding. Residue Asp-173 is the Proton donor of the active site.

This sequence belongs to the ribulose-phosphate 3-epimerase family. Requires a divalent metal cation as cofactor.

It catalyses the reaction D-ribulose 5-phosphate = D-xylulose 5-phosphate. It functions in the pathway carbohydrate degradation. Catalyzes the reversible epimerization of D-ribulose 5-phosphate to D-xylulose 5-phosphate. This chain is Ribulose-phosphate 3-epimerase, found in Mycobacterium leprae (strain TN).